Consider the following 661-residue polypeptide: Protein WHI3 (661 aa).

Over residues 14–31 (ASSSDNVVSSTTNTHNIS) the composition is skewed to low complexity. The tract at residues 14 to 58 (ASSSDNVVSSTTNTHNISPSHRSSLNLNTTSHPHEASGRGSASGE) is disordered. The span at 32-44 (PSHRSSLNLNTTS) shows a compositional bias: polar residues. Phosphoserine is present on Ser231. Composition is skewed to low complexity over residues 237 to 272 (DPFS…SPQQ), 383 to 409 (NTSA…SASS), and 496 to 508 (KNNS…SNIT). Disordered regions lie at residues 237–280 (DPFS…QVNS), 383–410 (NTSA…ASSQ), 469–508 (EHMY…SNIT), and 613–661 (SSKG…HIKN). One can recognise an RRM domain in the interval 538 to 625 (NTLYVGNLPS…GGIRLSFSKN (88 aa)). Residues 628-647 (GVRGPNSRRGGSGNPNPNVN) show a composition bias toward low complexity. The segment covering 648-661 (MLSSYNSNVGHIKN) has biased composition (polar residues).

Its function is as follows. Involved in size control and cell cycle. This Saccharomyces cerevisiae (strain ATCC 204508 / S288c) (Baker's yeast) protein is Protein WHI3 (WHI3).